We begin with the raw amino-acid sequence, 460 residues long: Tyrosine phenol-lyase (460 aa).

K260 is modified (N6-(pyridoxal phosphate)lysine).

It belongs to the beta-eliminating lyase family. Homotetramer. Pyridoxal 5'-phosphate is required as a cofactor.

The catalysed reaction is L-tyrosine + H2O = phenol + pyruvate + NH4(+). This chain is Tyrosine phenol-lyase, found in Fusobacterium nucleatum subsp. nucleatum (strain ATCC 25586 / DSM 15643 / BCRC 10681 / CIP 101130 / JCM 8532 / KCTC 2640 / LMG 13131 / VPI 4355).